The primary structure comprises 284 residues: Tropomyosin (284 aa).

Residues 1 to 284 (MDGIKKKMIA…DQTFAELTGY (284 aa)) are a coiled coil. Residues 111-131 (TKLEEASKTAEESERGRKDLE) form a disordered region.

This sequence belongs to the tropomyosin family. In terms of assembly, homodimer.

Its function is as follows. Tropomyosin, in association with the troponin complex, plays a central role in the calcium dependent regulation of muscle contraction. This is Tropomyosin from Schistosoma japonicum (Blood fluke).